We begin with the raw amino-acid sequence, 139 residues long: Endoribonuclease YbeY (139 aa).

Zn(2+) contacts are provided by H105, H109, and D115.

Belongs to the endoribonuclease YbeY family. Requires Zn(2+) as cofactor.

Its subcellular location is the cytoplasm. Its function is as follows. Single strand-specific metallo-endoribonuclease involved in late-stage 70S ribosome quality control and in maturation of the 3' terminus of the 16S rRNA. The sequence is that of Endoribonuclease YbeY from Flavobacterium johnsoniae (strain ATCC 17061 / DSM 2064 / JCM 8514 / BCRC 14874 / CCUG 350202 / NBRC 14942 / NCIMB 11054 / UW101) (Cytophaga johnsonae).